A 491-amino-acid chain; its full sequence is Probable cobyric acid synthase (491 aa).

The region spanning 252–444 is the GATase cobBQ-type domain; the sequence is PVEVNIVKFS…LHGILENFEF (193 aa). The Nucleophile role is filled by Cys-330. The active site involves His-436.

Belongs to the CobB/CobQ family. CobQ subfamily.

Its pathway is cofactor biosynthesis; adenosylcobalamin biosynthesis. Functionally, catalyzes amidations at positions B, D, E, and G on adenosylcobyrinic A,C-diamide. NH(2) groups are provided by glutamine, and one molecule of ATP is hydrogenolyzed for each amidation. The protein is Probable cobyric acid synthase of Methanococcus vannielii (strain ATCC 35089 / DSM 1224 / JCM 13029 / OCM 148 / SB).